Here is a 368-residue protein sequence, read N- to C-terminus: Homoserine O-acetyltransferase (368 aa).

The AB hydrolase-1 domain maps to 47–349; it reads NAILICHALS…SGEGHDSFLL (303 aa). Residue Ser-153 is the Nucleophile of the active site. Arg-221 provides a ligand contact to substrate. Residues Asp-311 and His-344 contribute to the active site. Asp-345 provides a ligand contact to substrate.

Belongs to the AB hydrolase superfamily. MetX family. Homodimer.

It localises to the cytoplasm. It catalyses the reaction L-homoserine + acetyl-CoA = O-acetyl-L-homoserine + CoA. Its pathway is amino-acid biosynthesis; L-methionine biosynthesis via de novo pathway; O-acetyl-L-homoserine from L-homoserine: step 1/1. In terms of biological role, transfers an acetyl group from acetyl-CoA to L-homoserine, forming acetyl-L-homoserine. This is Homoserine O-acetyltransferase from Leptospira borgpetersenii serovar Hardjo-bovis (strain JB197).